The primary structure comprises 238 residues: Complement C1q-like protein 4 (238 aa).

A signal peptide spans 1 to 15 (MVLLLLVAIPLLVHS). Residues 37–102 (SRGQGPDGAP…PGPGPGGAAP (66 aa)) are disordered. One can recognise a Collagen-like domain in the interval 53–96 (PPGAKGEVGRRGKAGLRGPPGPPGPRGPPGEPGRPGPPGPPGPG). Residues 71-96 (PPGPPGPRGPPGEPGRPGPPGPPGPG) are compositionally biased toward pro residues. The C1q domain occupies 105 to 238 (GYVPRIAFYA…TFSGFIIYPD (134 aa)).

In terms of assembly, forms homooligomers, predominantly dimers or trimers. Forms heterooligomers with C1QL1, C1QL2 and C1QL3, when proteins are coexpressed; this interaction does not occur after secretion. Interacts with ADGRB3. As to expression, highly expressed in testis and adipose tissue, brown adipose tissue expressing higher levels than subcutaneous and visceral white adipose tissue. In gonadal fat pad, expressed at lower levels in adipocytes than in the stromal vascular fraction (VSP), which contains preadipocytes, fibroblasts, endothelial cells and occasional immune cells. Expression exhibits sexually dimorphism, with higher levels in females than in males.

The protein resides in the secreted. May regulate the number of excitatory synapses that are formed on hippocampus neurons. Has no effect on inhibitory synapses. May inhibit adipocyte differentiation at an early stage of the process. This Mus musculus (Mouse) protein is Complement C1q-like protein 4 (C1ql4).